The primary structure comprises 159 residues: Superoxide dismutase [Cu-Zn] (159 aa).

Positions 47, 49, and 64 each coordinate Cu cation. C58 and C150 form a disulfide bridge. Zn(2+) contacts are provided by H64, H72, H81, and D84. H121 contacts Cu cation.

This sequence belongs to the Cu-Zn superoxide dismutase family. The cofactor is Cu cation. Zn(2+) is required as a cofactor.

It is found in the cytoplasm. It carries out the reaction 2 superoxide + 2 H(+) = H2O2 + O2. In terms of biological role, destroys radicals which are normally produced within the cells and which are toxic to biological systems. This is Superoxide dismutase [Cu-Zn] (SOD) from Haemonchus contortus (Barber pole worm).